A 229-amino-acid polypeptide reads, in one-letter code: CRISPR pre-crRNA endoribonuclease Cas5d (229 aa).

It belongs to the CRISPR-associated protein Cas5 family. Subtype I-C/Dvulg subfamily. Does not require a metal cofactor. is required as a cofactor.

CRISPR (clustered regularly interspaced short palindromic repeat) is an adaptive immune system that provides protection against mobile genetic elements (viruses, transposable elements and conjugative plasmids). CRISPR clusters contain spacers, sequences complementary to antecedent mobile elements, and target invading nucleic acids. CRISPR clusters are transcribed and processed into CRISPR RNA (crRNA). This protein is a sequence-specific endonuclease that cleaves pre-crRNA into mature crRNA, possibly by an intramolecular attack of the 2'-hydroxyl group of G26 on the scissile phosphodiester, cutting the precursor 3' to G26 residue yielding 5'-hydroxyl and 2' and/or 3' ends lacking a hydroxyl group (perhaps a 2'/3' cyclic phosphodiester). Requires between 4 and 8 nt downstream of the cleavage site for both binding and cleavage of pre-crRNA. Substitution with dG at this position abolishes cleavage but not RNA binding. Does not cleave pre-crRNA associated with the M.succiniciproducens strain MBEL55E Cas5 protein (AC Q65TW5) CRISPR locus. This chain is CRISPR pre-crRNA endoribonuclease Cas5d, found in Thermus thermophilus (strain ATCC BAA-163 / DSM 7039 / HB27).